Reading from the N-terminus, the 311-residue chain is MSEELTPQQVTRMTKLQKRLRTEVGRAIGDYNMIEEGDRVMCCLSGGKDSYAMLDILLNLQQRAPIKFEIVAVNLDQKQPGFPEDILPAYLDTLGVAYHILEKDTYSIVKDKIPEGKTTCSLCSRLRRGTLYGFAQKIGATKIALGHHRDDIIETMFLNMFFAGKMKAMPPKLLSDDGANMVIRPLAYAREKDIAEYAALKGFPIIPCNLCGSQENLKRAAVKEMLVQWDKQHPGRIETIFTAMQNTAPSQGVDREQFDFLSLQRDPDAPMSGQVAESDLPAFDFVDVSNNGHINLDAAARIDVVSTYTPE.

Residues 45 to 50 (SGGKDS) carry the PP-loop motif motif. [4Fe-4S] cluster is bound by residues Cys120, Cys123, and Cys211.

The protein belongs to the TtcA family. As to quaternary structure, homodimer. Requires Mg(2+) as cofactor. It depends on [4Fe-4S] cluster as a cofactor.

Its subcellular location is the cytoplasm. It carries out the reaction cytidine(32) in tRNA + S-sulfanyl-L-cysteinyl-[cysteine desulfurase] + AH2 + ATP = 2-thiocytidine(32) in tRNA + L-cysteinyl-[cysteine desulfurase] + A + AMP + diphosphate + H(+). Its pathway is tRNA modification. Functionally, catalyzes the ATP-dependent 2-thiolation of cytidine in position 32 of tRNA, to form 2-thiocytidine (s(2)C32). The sulfur atoms are provided by the cysteine/cysteine desulfurase (IscS) system. In Shewanella pealeana (strain ATCC 700345 / ANG-SQ1), this protein is tRNA-cytidine(32) 2-sulfurtransferase.